The chain runs to 622 residues: Phosphomethylpyrimidine synthase (622 aa).

A disordered region spans residues 109-130; sequence EPISNNNNDRQSSDKQLSFTTN. Substrate is bound by residues N234, M263, Y292, H328, 348–350, 389–392, and E428; these read SRG and DGLR. Zn(2+) is bound at residue H432. Residue Y455 participates in substrate binding. H496 contributes to the Zn(2+) binding site. [4Fe-4S] cluster is bound by residues C576, C579, and C584.

This sequence belongs to the ThiC family. In terms of assembly, homodimer. The cofactor is [4Fe-4S] cluster.

It carries out the reaction 5-amino-1-(5-phospho-beta-D-ribosyl)imidazole + S-adenosyl-L-methionine = 4-amino-2-methyl-5-(phosphooxymethyl)pyrimidine + CO + 5'-deoxyadenosine + formate + L-methionine + 3 H(+). It functions in the pathway cofactor biosynthesis; thiamine diphosphate biosynthesis. Functionally, catalyzes the synthesis of the hydroxymethylpyrimidine phosphate (HMP-P) moiety of thiamine from aminoimidazole ribotide (AIR) in a radical S-adenosyl-L-methionine (SAM)-dependent reaction. This chain is Phosphomethylpyrimidine synthase, found in Baumannia cicadellinicola subsp. Homalodisca coagulata.